A 229-amino-acid polypeptide reads, in one-letter code: ATP-dependent dethiobiotin synthetase BioD (229 aa).

12–17 (GAGKTI) serves as a coordination point for ATP. Thr16 is a binding site for Mg(2+). Residue Lys38 is part of the active site. ATP-binding positions include Asp46, 105-108 (EGVG), and 165-166 (SE). Asp46 and Glu105 together coordinate Mg(2+).

It belongs to the dethiobiotin synthetase family. In terms of assembly, homodimer. Mg(2+) serves as cofactor.

The protein resides in the cytoplasm. The enzyme catalyses (7R,8S)-7,8-diammoniononanoate + CO2 + ATP = (4R,5S)-dethiobiotin + ADP + phosphate + 3 H(+). The catalysed reaction is (7R,8S)-8-amino-7-(carboxyamino)nonanoate + ATP = (4R,5S)-dethiobiotin + ADP + phosphate + H(+). The protein operates within cofactor biosynthesis; biotin biosynthesis; biotin from 7,8-diaminononanoate: step 1/2. Its function is as follows. Catalyzes a mechanistically unusual reaction, the ATP-dependent insertion of CO2 between the N7 and N8 nitrogen atoms of 7,8-diaminopelargonic acid (DAPA, also called 7,8-diammoniononanoate) to form a ureido ring. This cyanobacterium does not encode bioA (which catalyzes the formation of the precursor for this reaction in the cannonical pathway), instead it encodes bioU, which replaces bioA and also performs the first half of the cannonical BioD reaction. Thus in this organism BioD has a different substrate. This Gloeobacter violaceus (strain ATCC 29082 / PCC 7421) protein is ATP-dependent dethiobiotin synthetase BioD.